A 447-amino-acid chain; its full sequence is GTPase Der (447 aa).

2 EngA-type G domains span residues 4–165 (QIIA…PKEK) and 180–357 (VQIV…KNWN). GTP is bound by residues 10–17 (GRPNVGKS), 57–61 (DTPGL), 119–122 (NKCE), 186–193 (GRPNAGKS), 233–237 (DTAGL), and 298–301 (NKWD). In terms of domain architecture, KH-like spans 358–443 (KKITTSKLNE…PIRFAYVKTK (86 aa)).

It belongs to the TRAFAC class TrmE-Era-EngA-EngB-Septin-like GTPase superfamily. EngA (Der) GTPase family. Associates with the 50S ribosomal subunit.

Its function is as follows. GTPase that plays an essential role in the late steps of ribosome biogenesis. In Rickettsia canadensis (strain McKiel), this protein is GTPase Der.